The sequence spans 167 residues: Leptin (167 aa).

An N-terminal signal peptide occupies residues 1–21 (MRCGPLYRFLWLWPYLSYVEA). The cysteines at positions 117 and 167 are disulfide-linked.

This sequence belongs to the leptin family.

The protein localises to the secreted. Its function is as follows. Key player in the regulation of energy balance and body weight control. Once released into the circulation, has central and peripheral effects by binding LEPR, found in many tissues, which results in the activation of several major signaling pathways. In the hypothalamus, acts as an appetite-regulating factor that induces a decrease in food intake and an increase in energy consumption by inducing anorexinogenic factors and suppressing orexigenic neuropeptides, also regulates bone mass and secretion of hypothalamo-pituitary-adrenal hormones. In the periphery, increases basal metabolism, influences reproductive function, regulates pancreatic beta-cell function and insulin secretion, is pro-angiogenic for endothelial cell and affects innate and adaptive immunity. In the arcuate nucleus of the hypothalamus, activates by depolarization POMC neurons inducing FOS and SOCS3 expression to release anorexigenic peptides and inhibits by hyperpolarization NPY neurons inducing SOCS3 with a consequent reduction on release of orexigenic peptides. In addition to its known satiety inducing effect, has a modulatory role in nutrient absorption. In the intestine, reduces glucose absorption by enterocytes by activating PKC and leading to a sequential activation of p38, PI3K and ERK signaling pathways which exerts an inhibitory effect on glucose absorption. Acts as a growth factor on certain tissues, through the activation of different signaling pathways increases expression of genes involved in cell cycle regulation such as CCND1, via JAK2-STAT3 pathway, or VEGFA, via MAPK1/3 and PI3K-AKT1 pathways. May also play an apoptotic role via JAK2-STAT3 pathway and up-regulation of BIRC5 expression. Pro-angiogenic, has mitogenic activity on vascular endothelial cells and plays a role in matrix remodeling by regulating the expression of matrix metalloproteinases (MMPs) and tissue inhibitors of metalloproteinases (TIMPs). In innate immunity, modulates the activity and function of neutrophils by increasing chemotaxis and the secretion of oxygen radicals. Increases phagocytosis by macrophages and enhances secretion of pro-inflammatory mediators. Increases cytotoxic ability of NK cells. Plays a pro-inflammatory role, in synergy with IL1B, by inducing NOS2 which promotes the production of IL6, IL8 and Prostaglandin E2, through a signaling pathway that involves JAK2, PI3K, MAP2K1/MEK1 and MAPK14/p38. In adaptive immunity, promotes the switch of memory T-cells towards T helper-1 cell immune responses. Increases CD4(+)CD25(-) T-cell proliferation and reduces autophagy during TCR (T-cell receptor) stimulation, through MTOR signaling pathway activation and BCL2 up-regulation. This chain is Leptin (LEP), found in Capra hircus (Goat).